The primary structure comprises 150 residues: Putative HTH-type transcriptional regulator rrf2-like (150 aa).

Positions 1-139 (MITQKMKYAL…DSLTLEDMLA (139 aa)) constitute an HTH rrf2-type domain.

This Rhodobacter capsulatus (strain ATCC BAA-309 / NBRC 16581 / SB1003) protein is Putative HTH-type transcriptional regulator rrf2-like.